The primary structure comprises 314 residues: MKLNVAVQMDPIARINIKGDSTFALLLEAQKRGHGLSYYTPDKLSMIGEELVAPVQLLTVRDEPGDHFTLGEPKREALNGFDVVLLRQDPPFDLAYITSTHFLERIHPKTLVVNDPASVRNAPEKLFVMNFPQLMPPTLISRDLDEINAFRDKHGAVVMKPLHGHGGAAVFRVMPQDMNFGSLFDMFTVTFKEPWVIQQFIPEVKHGDKRIILVNGEFAGAVNRVPAADDLRSNMVRGGAAQETELTPREREICATVGPALRERGLLFVGIDVINGNLTEINVTSPTGIRAIARLGGPDVAAKVWDTIEQKRAK.

The ATP-grasp domain occupies 125–309 (KLFVMNFPQL…VAAKVWDTIE (185 aa)). 151–207 (RDKHGAVVMKPLHGHGGAAVFRVMPQDMNFGSLFDMFTVTFKEPWVIQQFIPEVKHG) is an ATP binding site. 2 residues coordinate Mg(2+): E280 and N282.

This sequence belongs to the prokaryotic GSH synthase family. Requires Mg(2+) as cofactor. Mn(2+) is required as a cofactor.

It carries out the reaction gamma-L-glutamyl-L-cysteine + glycine + ATP = glutathione + ADP + phosphate + H(+). The protein operates within sulfur metabolism; glutathione biosynthesis; glutathione from L-cysteine and L-glutamate: step 2/2. The polypeptide is Glutathione synthetase (Bradyrhizobium diazoefficiens (strain JCM 10833 / BCRC 13528 / IAM 13628 / NBRC 14792 / USDA 110)).